A 665-amino-acid polypeptide reads, in one-letter code: Dual specificity protein phosphatase 16 (665 aa).

A Rhodanese domain is found at 22-137; it reads GTEKVLLIDS…FSRCFPGLCE (116 aa). Residue lysine 55 is modified to (Microbial infection) N6-acetyllysine; by EIS. One can recognise a Tyrosine-protein phosphatase domain in the interval 158–300; it reads GPTRILPNLY…LLDYEKKIKN (143 aa). Cysteine 244 acts as the Phosphocysteine intermediate in catalysis. Positions 321 to 368 are disordered; it reads EPVPAVSEGGQKSETPLSPPCADSATSEAAGQRPVHPASVPSVPSVQP. The span at 354–368 shows a compositional bias: low complexity; that stretch reads PVHPASVPSVPSVQP. At serine 446 the chain carries Phosphoserine; by MAPK1. 2 stretches are compositionally biased toward polar residues: residues 449 to 458 and 487 to 499; these read QELSEQTPET and VRTSSSGTAQRSL. Disordered regions lie at residues 449-505 and 597-665; these read QELS…PLHR and VRRR…IEVS. Residue serine 501 is modified to Phosphoserine. Residues 602-622 are compositionally biased toward basic and acidic residues; it reads KPSDRADSRRSWHEESPFEKQ.

The protein belongs to the protein-tyrosine phosphatase family. Non-receptor class dual specificity subfamily. In terms of assembly, interacts with ARRB2. Post-translationally, phosphorylated at Ser-446 by MAPK1/ERK2, which prevents its degradation, and thereby stabilizes it and blocks JNK MAPK activity. (Microbial infection) Acetylated at Lys-55 by the M.tuberculosis Eis protein; this leads to the inhibition of JNK-dependent autophagy, phagosome maturation, and ROS (reactive oxygen species) generation for enhanced intracellular survival of M.tuberculosis.

It localises to the cytoplasm. The protein localises to the nucleus. Its subcellular location is the cytoplasmic vesicle. It catalyses the reaction O-phospho-L-tyrosyl-[protein] + H2O = L-tyrosyl-[protein] + phosphate. The catalysed reaction is O-phospho-L-seryl-[protein] + H2O = L-seryl-[protein] + phosphate. The enzyme catalyses O-phospho-L-threonyl-[protein] + H2O = L-threonyl-[protein] + phosphate. Its function is as follows. Dual specificity protein phosphatase involved in the inactivation of MAP kinases. Dephosphorylates MAPK10 bound to ARRB2. This is Dual specificity protein phosphatase 16 (DUSP16) from Homo sapiens (Human).